The chain runs to 114 residues: MHELGITQNIIAIVAEQAKGIPVKRVTLEIGQLSAIMADSIRFCFDICCQGTVLEGATLEIIEILGRGKCRDCGQEIALFQPFGTCDRCGSIQLEIIQGQELKIKEMEIEEICV.

Residue His2 coordinates Ni(2+). Residues Cys70, Cys73, Cys86, and Cys89 each coordinate Zn(2+).

The protein belongs to the HypA/HybF family.

Its function is as follows. Involved in the maturation of [NiFe] hydrogenases. Required for nickel insertion into the metal center of the hydrogenase. The protein is Hydrogenase maturation factor HypA of Rippkaea orientalis (strain PCC 8801 / RF-1) (Cyanothece sp. (strain PCC 8801)).